We begin with the raw amino-acid sequence, 577 residues long: Cleavage stimulation factor subunit 2 (577 aa).

Position 14 is a phosphoserine (S14). The 79-residue stretch at 16–94 (RSVFVGNIPY…RALRVDNAAS (79 aa)) folds into the RRM domain. The interactions with CSTF3 and SYMPK stretch occupies residues 108–248 (APVIESPYGE…VNGAPPLMQA (141 aa)). K189 is covalently cross-linked (Glycyl lysine isopeptide (Lys-Gly) (interchain with G-Cter in SUMO2)). A disordered region spans residues 207–230 (PVHGAGPGSGSNVSMNQQNPQAPQ). R308 carries the omega-N-methylarginine modification. Residues 319-409 (RGLLGDAPND…DGRGGRDPRG (91 aa)) are disordered. Positions 360–373 (PGHESRGPPPHELR) are enriched in basic and acidic residues. Residues 410 to 414 (IDARG) form a 1; approximate repeat. The 12 X 5 AA tandem repeats of M-E-A-R-[AG] stretch occupies residues 410–469 (IDARGMEARAMEARGLDARGLEARAMEARAMEARAMEARAMEARAMEVRGMEARGMDTRG). A run of 2 repeats spans residues 415-419 (MEARA) and 420-424 (MEARG). One copy of the 4; approximate repeat lies at 425 to 429 (LDARG). The stretch at 430–434 (LEARA) is one 5; approximate repeat. A run of 4 repeats spans residues 435 to 439 (MEARA), 440 to 444 (MEARA), 445 to 449 (MEARA), and 450 to 454 (MEARA). A 10; approximate repeat occupies 455–459 (MEVRG). Repeat unit 11 spans residues 460 to 464 (MEARG). The stretch at 465 to 469 (MDTRG) is one 12; approximate repeat. Residues R468 and R475 each carry the omega-N-methylarginine modification. The segment at 509–532 (LQGASIQGGSQPGGFSPGQNQVTP) is disordered. Positions 514-577 (IQGGSQPGGF…EQIQKSTGAP (64 aa)) are interaction with RPO2TC1. S518 and S524 each carry phosphoserine.

As to quaternary structure, the CSTF complex is composed of CSTF1 (50 kDa subunit), CSTF2 (64 kDa subunit) and CSTF3 (77 kDa subunit). CSTF2 directly interacts with CSTF3, SYMPK and RPO2TC1. Interacts with HSF1 in heat-stressed cells. Interacts with CPSF2, CPSF3 and FIP1L1. Interacts with DDX1.

It localises to the nucleus. One of the multiple factors required for polyadenylation and 3'-end cleavage of mammalian pre-mRNAs. This subunit is directly involved in the binding to pre-mRNAs. In Pongo abelii (Sumatran orangutan), this protein is Cleavage stimulation factor subunit 2 (CSTF2).